A 413-amino-acid chain; its full sequence is MALVMHTYKGNKGANKALIAAEYAGVKIEESADFQMGVTNKSPEFLKMNPIGKVPVLETPEGPIFESNAIARYVSRKNGDNSLNGSSLIEYAHIEQWIDFSSLEIDANMLKWFAPRMGYAPFSAPAEEAAISALKRGLEALNTHLASNTFLVGHSVTLADIVTICNLNLGFATVMTKKFTSAFPHVERYFWTMVNQPEFKKVLGDAKQTEAVPPVPTKKAPQPAKPKEEPKKAAPVAEAPKPAEEEEAPKPKAKNPLDLLPPSPMVLDDWKRLYSNTKSNFREVAIKGFWDMYDPEGYSLWFCDYKYNDENMVSFVTLNKVGGFLQRMDLARKYSFGKMLICGSEGPFKVKGLWLFRGPEIPKFIMDEVYDMELYEWTKVDISDEAQKERVSQMIEDAEPFEGEALLDAKCFK.

Residues 1 to 82 (MALVMHTYKG…YVSRKNGDNS (82 aa)) enclose the GST N-terminal domain. Residues 87-215 (SLIEYAHIEQ…AKQTEAVPPV (129 aa)) form the GST C-terminal domain. The segment at 207-260 (KQTEAVPPVPTKKAPQPAKPKEEPKKAAPVAEAPKPAEEEEAPKPKAKNPLDLL) is disordered. The 161-residue stretch at 253 to 413 (AKNPLDLLPP…EALLDAKCFK (161 aa)) folds into the EF-1-gamma C-terminal domain.

EF-1 is composed of four subunits: alpha, beta, delta, and gamma.

Its function is as follows. Probably plays a role in anchoring the complex to other cellular components. The sequence is that of Probable elongation factor 1-gamma 2 from Arabidopsis thaliana (Mouse-ear cress).